The following is a 223-amino-acid chain: Uracil-DNA glycosylase (223 aa).

The Proton acceptor role is filled by Asp67.

It belongs to the uracil-DNA glycosylase (UDG) superfamily. UNG family.

The protein resides in the cytoplasm. It carries out the reaction Hydrolyzes single-stranded DNA or mismatched double-stranded DNA and polynucleotides, releasing free uracil.. Functionally, excises uracil residues from the DNA which can arise as a result of misincorporation of dUMP residues by DNA polymerase or due to deamination of cytosine. The polypeptide is Uracil-DNA glycosylase (Borreliella burgdorferi (strain ZS7) (Borrelia burgdorferi)).